A 291-amino-acid chain; its full sequence is MLKPTWLRVKAPQKERIGTINRLLTDLKLNTVCEEASCPNIGECFAGGTATFLIMGPGCTRACPYCDIDFDKSIRTVDHTEPTRIGEAVSRMRLKHVVITSVNRDDLADGGASHFVACIAAVRAASPTTTIEVLIPDFCGNLNSIDKVLAAKPEIINHNIETVPRIYNRVRPQGVYQRSLYLLDWIKSNDKNLYTKSGLMVGLGEIDAEVLEVMADLRAIQVDVVTIGQYLSPGSKHLPIDRFVTPTQFDNYKAIGELEMNFLQVVSTPLTRSSYHSGEFRNLMRDNPRQN.

The [4Fe-4S] cluster site is built by cysteine 33, cysteine 38, cysteine 44, cysteine 59, cysteine 63, cysteine 66, and serine 274. In terms of domain architecture, Radical SAM core spans phenylalanine 45 to leucine 263.

Belongs to the radical SAM superfamily. Lipoyl synthase family. The cofactor is [4Fe-4S] cluster.

It is found in the plastid. Its subcellular location is the organellar chromatophore. It catalyses the reaction [[Fe-S] cluster scaffold protein carrying a second [4Fe-4S](2+) cluster] + N(6)-octanoyl-L-lysyl-[protein] + 2 oxidized [2Fe-2S]-[ferredoxin] + 2 S-adenosyl-L-methionine + 4 H(+) = [[Fe-S] cluster scaffold protein] + N(6)-[(R)-dihydrolipoyl]-L-lysyl-[protein] + 4 Fe(3+) + 2 hydrogen sulfide + 2 5'-deoxyadenosine + 2 L-methionine + 2 reduced [2Fe-2S]-[ferredoxin]. It functions in the pathway protein modification; protein lipoylation via endogenous pathway; protein N(6)-(lipoyl)lysine from octanoyl-[acyl-carrier-protein]: step 2/2. Its function is as follows. Catalyzes the radical-mediated insertion of two sulfur atoms into the C-6 and C-8 positions of the octanoyl moiety bound to the lipoyl domains of lipoate-dependent enzymes, thereby converting the octanoylated domains into lipoylated derivatives. In Paulinella chromatophora, this protein is Lipoyl synthase, organellar chromatophore.